The sequence spans 224 residues: LexA repressor (224 aa).

The segment at residues 31-51 (RAEIANTLGFKSANAAEEHLQ) is a DNA-binding region (H-T-H motif). Catalysis depends on for autocatalytic cleavage activity residues Ser142 and Lys179.

Belongs to the peptidase S24 family. Homodimer.

It carries out the reaction Hydrolysis of Ala-|-Gly bond in repressor LexA.. In terms of biological role, represses a number of genes involved in the response to DNA damage (SOS response), including recA and lexA. In the presence of single-stranded DNA, RecA interacts with LexA causing an autocatalytic cleavage which disrupts the DNA-binding part of LexA, leading to derepression of the SOS regulon and eventually DNA repair. This chain is LexA repressor, found in Delftia acidovorans (strain DSM 14801 / SPH-1).